Consider the following 335-residue polypeptide: Protein-arginine N-acetylglucosaminyltransferase SseK3 (335 aa).

UDP-N-acetyl-alpha-D-glucosamine contacts are provided by residues Gln-51 to Phe-53 and Tyr-75. N-beta-linked (GlcNAc) arginine; by autocatalysis glycosylation is found at Arg-153 and Arg-184. Tyr-224–Ala-227 is a UDP-N-acetyl-alpha-D-glucosamine binding site. The DXD motif motif lies at Asp-226 to Asp-228. Asp-228 serves as a coordination point for Mn(2+). The active-site Proton acceptor is the Glu-258. Arg-305 is a glycosylation site (N-beta-linked (GlcNAc) arginine; by autocatalysis). Asp-325 and Ser-327 together coordinate Mn(2+). Residues Ser-327 and Ser-332 to Arg-335 each bind UDP-N-acetyl-alpha-D-glucosamine. Residue Arg-335 is glycosylated (N-beta-linked (GlcNAc) arginine; by autocatalysis).

Belongs to the glycosyltransferase NleB family. Interacts with host TRIM32; without mediating its GlcNAcylation. Mn(2+) serves as cofactor. Post-translationally, auto-glycosylated: arginine GlcNAcylation is required for activity toward death domain-containing host target proteins.

Its subcellular location is the secreted. It is found in the host Golgi apparatus. It carries out the reaction L-arginyl-[protein] + UDP-N-acetyl-alpha-D-glucosamine = N(omega)-(N-acetyl-beta-D-glucosaminyl)-L-arginyl-[protein] + UDP + H(+). In terms of biological role, protein-arginine N-acetylglucosaminyltransferase effector that disrupts TNF signaling in infected cells, including NF-kappa-B signaling and apoptosis. Acts by catalyzing the transfer of a single N-acetylglucosamine (GlcNAc) to a conserved arginine residue in the death domain of host proteins such as TRADD, TNFRSF1A/TNFR1 and TNFRSF10B/TRAILR2: arginine GlcNAcylation prevents homotypic/heterotypic death domain interactions and assembly of the oligomeric TNF-alpha receptor complex, thereby disrupting TNF signaling. Also acts on host proteins without a death domain: catalyzes arginine GlcNAcylation of host small Rab GTPase (Rab1, Rab5 and Rab11), thereby preventing GTPase activity and leading to impaired host vesicular protein transport. Also mediates auto-GlcNAcylation, which is required for activity toward death domain-containing host target proteins. The chain is Protein-arginine N-acetylglucosaminyltransferase SseK3 from Salmonella typhimurium (strain SL1344).